The chain runs to 432 residues: Gamma-glutamyl phosphate reductase (432 aa).

The protein belongs to the gamma-glutamyl phosphate reductase family.

Its subcellular location is the cytoplasm. The enzyme catalyses L-glutamate 5-semialdehyde + phosphate + NADP(+) = L-glutamyl 5-phosphate + NADPH + H(+). It participates in amino-acid biosynthesis; L-proline biosynthesis; L-glutamate 5-semialdehyde from L-glutamate: step 2/2. In terms of biological role, catalyzes the NADPH-dependent reduction of L-glutamate 5-phosphate into L-glutamate 5-semialdehyde and phosphate. The product spontaneously undergoes cyclization to form 1-pyrroline-5-carboxylate. The protein is Gamma-glutamyl phosphate reductase of Clavibacter michiganensis subsp. michiganensis (strain NCPPB 382).